The sequence spans 74 residues: Acyl carrier protein (74 aa).

One can recognise a Carrier domain in the interval M1–S73. Residue S35 is modified to O-(pantetheine 4'-phosphoryl)serine.

The protein belongs to the acyl carrier protein (ACP) family. Post-translationally, 4'-phosphopantetheine is transferred from CoA to a specific serine of apo-ACP by AcpS. This modification is essential for activity because fatty acids are bound in thioester linkage to the sulfhydryl of the prosthetic group.

The protein resides in the cytoplasm. The protein operates within lipid metabolism; fatty acid biosynthesis. Functionally, carrier of the growing fatty acid chain in fatty acid biosynthesis. The protein is Acyl carrier protein of Streptococcus pyogenes serotype M1.